The sequence spans 349 residues: Protein-glutamate methylesterase/protein-glutamine glutaminase 1 (349 aa).

A Response regulatory domain is found at 2–119 (RTLIVDDSAF…DVNKAEKELV (118 aa)). 4-aspartylphosphate is present on Asp-53. In terms of domain architecture, CheB-type methylesterase spans 158-345 (ILIGSSTGGP…EEIVKRLEAK (188 aa)). Residues Ser-163, His-190, and Asp-287 contribute to the active site.

The protein belongs to the CheB family. Post-translationally, phosphorylated by CheA. Phosphorylation of the N-terminal regulatory domain activates the methylesterase activity.

Its subcellular location is the cytoplasm. It carries out the reaction [protein]-L-glutamate 5-O-methyl ester + H2O = L-glutamyl-[protein] + methanol + H(+). It catalyses the reaction L-glutaminyl-[protein] + H2O = L-glutamyl-[protein] + NH4(+). Functionally, involved in chemotaxis. Part of a chemotaxis signal transduction system that modulates chemotaxis in response to various stimuli. Catalyzes the demethylation of specific methylglutamate residues introduced into the chemoreceptors (methyl-accepting chemotaxis proteins or MCP) by CheR. Also mediates the irreversible deamidation of specific glutamine residues to glutamic acid. This is Protein-glutamate methylesterase/protein-glutamine glutaminase 1 from Methanosarcina acetivorans (strain ATCC 35395 / DSM 2834 / JCM 12185 / C2A).